We begin with the raw amino-acid sequence, 248 residues long: uncharacterized protein (248 aa).

Transmembrane regions (helical) follow at residues 65-85 (IIIY…QFLT), 105-125 (SITS…ILWY), 126-146 (ISWT…LGFI), 156-176 (LCCF…TLLI), 188-208 (LILN…SDYS), and 222-242 (VIYI…YKYT).

It localises to the cell membrane. This is an uncharacterized protein from Rickettsia prowazekii (strain Madrid E).